Consider the following 408-residue polypeptide: MKRVHIMVLDSFGIGAAGDAEKFGDQGADTLGHIAQAFAEGKADKDGRKGPLHLPNLCRLGLGKAAEESTGKFPVGLDKDAEIIGAYGYASEISSGKDTPSGHWEIAGVPVLFDWGYFKDLKNSFPQELLDNIVKRANLPGYLGNCHASGTVILDELGEEHMKTGKPIFYTSADSVFQIACHEETFGLDKLYELCEIARDELNKGDYNIGRVIARPFIGDKPGNFSRTGNRHDLAVEPPAPTMLKKLVDEKQGHVVSIGKIADIYANVGITKKVKATGIDALFDATIEEMKLAGDNTIVFTNFVDFDSSYGHRRDVVGYGEALELFDRRLPELMELVKEDDILILTADHGCDPTWQGSDHTREHIPVLVYGPKVKPGSLGHRETFADIGQTVVKYFGLSPVEYGKAMF.

Mn(2+) contacts are provided by Asp-10, Asp-307, His-312, Asp-348, His-349, and His-360.

Belongs to the phosphopentomutase family. The cofactor is Mn(2+).

The protein localises to the cytoplasm. The enzyme catalyses 2-deoxy-alpha-D-ribose 1-phosphate = 2-deoxy-D-ribose 5-phosphate. It carries out the reaction alpha-D-ribose 1-phosphate = D-ribose 5-phosphate. It functions in the pathway carbohydrate degradation; 2-deoxy-D-ribose 1-phosphate degradation; D-glyceraldehyde 3-phosphate and acetaldehyde from 2-deoxy-alpha-D-ribose 1-phosphate: step 1/2. In terms of biological role, isomerase that catalyzes the conversion of deoxy-ribose 1-phosphate (dRib-1-P) and ribose 1-phosphate (Rib-1-P) to deoxy-ribose 5-phosphate (dRib-5-P) and ribose 5-phosphate (Rib-5-P), respectively. The protein is Phosphopentomutase of Proteus mirabilis (strain HI4320).